A 466-amino-acid polypeptide reads, in one-letter code: Cysteine--tRNA ligase (466 aa).

Zn(2+) is bound at residue Cys27. Positions 29 to 39 match the 'HIGH' region motif; the sequence is PTVYDLAHIGN. The Zn(2+) site is built by Cys211, His236, and Glu240. Residues 270–274 carry the 'KMSKS' region motif; that stretch reads KMSKS. Lys273 contributes to the ATP binding site.

This sequence belongs to the class-I aminoacyl-tRNA synthetase family. Monomer. Zn(2+) is required as a cofactor.

It localises to the cytoplasm. The enzyme catalyses tRNA(Cys) + L-cysteine + ATP = L-cysteinyl-tRNA(Cys) + AMP + diphosphate. The chain is Cysteine--tRNA ligase from Anaplasma marginale (strain St. Maries).